The sequence spans 234 residues: Leucyl/phenylalanyl-tRNA--protein transferase (234 aa).

Belongs to the L/F-transferase family.

The protein localises to the cytoplasm. It catalyses the reaction N-terminal L-lysyl-[protein] + L-leucyl-tRNA(Leu) = N-terminal L-leucyl-L-lysyl-[protein] + tRNA(Leu) + H(+). The enzyme catalyses N-terminal L-arginyl-[protein] + L-leucyl-tRNA(Leu) = N-terminal L-leucyl-L-arginyl-[protein] + tRNA(Leu) + H(+). The catalysed reaction is L-phenylalanyl-tRNA(Phe) + an N-terminal L-alpha-aminoacyl-[protein] = an N-terminal L-phenylalanyl-L-alpha-aminoacyl-[protein] + tRNA(Phe). Functions in the N-end rule pathway of protein degradation where it conjugates Leu, Phe and, less efficiently, Met from aminoacyl-tRNAs to the N-termini of proteins containing an N-terminal arginine or lysine. This is Leucyl/phenylalanyl-tRNA--protein transferase from Enterobacter sp. (strain 638).